Consider the following 1486-residue polypeptide: Chromosome partition protein MukB (1486 aa).

34–41 (GGNGAGKS) is a binding site for ATP. 3 coiled-coil regions span residues 326–418 (LEAD…QYNQ), 444–480 (LETFQAKELEATEKMLSLEQKMSMAQTAHSQFEQAYQ), and 509–603 (RHLA…RAPV). The segment at 666–783 (PGGSEDQRLN…EVPLFGRAAR (118 aa)) is flexible hinge. Coiled-coil stretches lie at residues 835–923 (EAEI…AKLE), 977–1115 (EMLS…TAKA), and 1209–1266 (VEAI…QNVS).

This sequence belongs to the SMC family. MukB subfamily. As to quaternary structure, homodimerization via its hinge domain. Binds to DNA via its C-terminal region. Interacts, and probably forms a ternary complex, with MukE and MukF via its C-terminal region. The complex formation is stimulated by calcium or magnesium. Interacts with tubulin-related protein FtsZ.

The protein localises to the cytoplasm. Its subcellular location is the nucleoid. In terms of biological role, plays a central role in chromosome condensation, segregation and cell cycle progression. Functions as a homodimer, which is essential for chromosome partition. Involved in negative DNA supercoiling in vivo, and by this means organize and compact chromosomes. May achieve or facilitate chromosome segregation by condensation DNA from both sides of a centrally located replisome during cell division. The polypeptide is Chromosome partition protein MukB (Shigella boydii serotype 4 (strain Sb227)).